A 228-amino-acid chain; its full sequence is Sugar fermentation stimulation protein homolog (228 aa).

The protein belongs to the SfsA family.

In Desulfitobacterium hafniense (strain DSM 10664 / DCB-2), this protein is Sugar fermentation stimulation protein homolog.